We begin with the raw amino-acid sequence, 372 residues long: MKDIFYMKKAIKLAKKGSLTTSPNPNVGCIIVNNNIIVGSGWHKKTGMKHAEIYALKTSGEKAKGATAYITLEPCSHFGKTPPCCVALTKYGISRVVIATLDPNPKVSGNGVKWLKKHGILVTIGTLSKESIKINKGFFQRMTTGIPWIKLKLASSIDGRTALNNGKSKWITSDKARHDVQHVREKSDAIISSSETILFDNPLLTVRNTNNNDNNQKLLKHSKTFLKQPIRVIIDSKNRITPSHKCIKQPGLLFLIRIHSDNNIWPSHIKQIILNNKSKKIDLIDLVKMLAKYQINNILIEAGPSLSSSFLKLNIINELIIYIAPKILGNYAKPLFFLENYSNLSDVPQFKFEKITQIGKDLKLILTKHNSS.

The region spanning 1-122 (MKDIFYMKKA…KWLKKHGILV (122 aa)) is the CMP/dCMP-type deaminase domain. The interval 1–145 (MKDIFYMKKA…KGFFQRMTTG (145 aa)) is deaminase. Histidine 50 lines the Zn(2+) pocket. Glutamate 52 functions as the Proton donor in the catalytic mechanism. Positions 75 and 84 each coordinate Zn(2+). Positions 146–372 (IPWIKLKLAS…KLILTKHNSS (227 aa)) are reductase. Residue alanine 154 coordinates NADP(+). Serine 168 serves as a coordination point for substrate. Tryptophan 170 provides a ligand contact to NADP(+). Arginine 184 is a substrate binding site. NADP(+) contacts are provided by threonine 196 and aspartate 200. Substrate-binding residues include leucine 204 and arginine 207. Serine 236 provides a ligand contact to NADP(+). Glutamate 301 is a substrate binding site. Residue 303–309 (GPSLSSS) participates in NADP(+) binding.

In the N-terminal section; belongs to the cytidine and deoxycytidylate deaminase family. It in the C-terminal section; belongs to the HTP reductase family. The cofactor is Zn(2+).

The catalysed reaction is 2,5-diamino-6-hydroxy-4-(5-phosphoribosylamino)-pyrimidine + H2O + H(+) = 5-amino-6-(5-phospho-D-ribosylamino)uracil + NH4(+). It catalyses the reaction 5-amino-6-(5-phospho-D-ribitylamino)uracil + NADP(+) = 5-amino-6-(5-phospho-D-ribosylamino)uracil + NADPH + H(+). It participates in cofactor biosynthesis; riboflavin biosynthesis; 5-amino-6-(D-ribitylamino)uracil from GTP: step 2/4. It functions in the pathway cofactor biosynthesis; riboflavin biosynthesis; 5-amino-6-(D-ribitylamino)uracil from GTP: step 3/4. Its function is as follows. Converts 2,5-diamino-6-(ribosylamino)-4(3h)-pyrimidinone 5'-phosphate into 5-amino-6-(ribosylamino)-2,4(1h,3h)-pyrimidinedione 5'-phosphate. This Buchnera aphidicola subsp. Baizongia pistaciae (strain Bp) protein is Riboflavin biosynthesis protein RibD (ribD).